The following is a 1038-amino-acid chain: Bone morphogenetic protein receptor type-2 (1038 aa).

The N-terminal stretch at 1 to 26 (MTSSLQRPWRVPWLPWTILLVSTAAA) is a signal peptide. Residues 27-150 (SQNQERLCAF…PPHSFNRDET (124 aa)) lie on the Extracellular side of the membrane. Cystine bridges form between C34–C66, C60–C84, C94–C117, C99–C116, and C118–C123. Residue N55 is glycosylated (N-linked (GlcNAc...) asparagine). A glycan (N-linked (GlcNAc...) asparagine) is linked at N110. N-linked (GlcNAc...) asparagine glycosylation occurs at N126. A helical membrane pass occupies residues 151–171 (IIIALASVSVLAVLIVALCFG). At 172–1038 (YRMLTGDRKQ…VSKDIGMNCL (867 aa)) the chain is on the cytoplasmic side. The Protein kinase domain maps to 203 to 504 (LKLLELIGRG…QCAEERMAEL (302 aa)). ATP-binding positions include 209 to 217 (IGRGRYGAV), K230, and 280 to 282 (EYY). The Proton acceptor role is filled by D333. ATP-binding positions include 337 to 338 (RN) and D351. A Phosphothreonine modification is found at T379. S586 bears the Phosphoserine mark. Residues 593–626 (QAQARIPSPETSVTSLSTNTTTTNTTGLTPSTGM) form a disordered region. The segment covering 603–626 (TSVTSLSTNTTTTNTTGLTPSTGM) has biased composition (low complexity). S680 and S681 each carry phosphoserine. 2 disordered regions span residues 746–770 (PKQQNLPKRPTSLPLNTKNSTKEPR) and 872–972 (RREQ…EKIK). Residues 872-896 (RREQQAGHDEGVLDRLVDRRERPLE) show a composition bias toward basic and acidic residues. Polar residues predominate over residues 937–964 (RPNSLDLSATNVLDGSSIQIGESTQDGK).

It belongs to the protein kinase superfamily. TKL Ser/Thr protein kinase family. TGFB receptor subfamily. As to quaternary structure, interacts with GDF5. Interacts with BMP4. Interacts with SCUBE3. Interacts with TSC22D1/TSC-22. Interacts with activin A/INHBA. Mg(2+) is required as a cofactor. The cofactor is Mn(2+). Highly expressed in heart and liver.

The protein localises to the cell membrane. It catalyses the reaction L-threonyl-[receptor-protein] + ATP = O-phospho-L-threonyl-[receptor-protein] + ADP + H(+). The enzyme catalyses L-seryl-[receptor-protein] + ATP = O-phospho-L-seryl-[receptor-protein] + ADP + H(+). In terms of biological role, on ligand binding, forms a receptor complex consisting of two type II and two type I transmembrane serine/threonine kinases. Type II receptors phosphorylate and activate type I receptors which autophosphorylate, then bind and activate SMAD transcriptional regulators. Can also mediate signaling through the activation of the p38MAPK cascade. Binds to BMP7, BMP2 and, less efficiently, BMP4. Binding is weak but enhanced by the presence of type I receptors for BMPs. Mediates induction of adipogenesis by GDF6. Promotes signaling also by binding to activin A/INHBA. The polypeptide is Bone morphogenetic protein receptor type-2 (BMPR2) (Homo sapiens (Human)).